Here is a 66-residue protein sequence, read N- to C-terminus: Large ribosomal subunit protein bL33c (66 aa).

Belongs to the bacterial ribosomal protein bL33 family.

It localises to the plastid. The protein resides in the chloroplast. This is Large ribosomal subunit protein bL33c from Platanus occidentalis (Sycamore).